The primary structure comprises 123 residues: Fluoride-specific ion channel FluC (123 aa).

The next 4 helical transmembrane spans lie at 1-21 (MQWL…GWLA), 32-52 (LGTL…LVWF), 66-86 (FVIT…AEVF), and 94-114 (LLAA…ATAL). Na(+) is bound by residues glycine 73 and threonine 76.

It belongs to the fluoride channel Fluc/FEX (TC 1.A.43) family.

The protein localises to the cell inner membrane. It catalyses the reaction fluoride(in) = fluoride(out). Its activity is regulated as follows. Na(+) is not transported, but it plays an essential structural role and its presence is essential for fluoride channel function. Fluoride-specific ion channel. Important for reducing fluoride concentration in the cell, thus reducing its toxicity. This chain is Fluoride-specific ion channel FluC, found in Psychrobacter arcticus (strain DSM 17307 / VKM B-2377 / 273-4).